Reading from the N-terminus, the 96-residue chain is Large ribosomal subunit protein bL27 (96 aa).

A propeptide spanning residues 1–11 (MLKTLENLQLF) is cleaved from the precursor. The tract at residues 13-36 (HKKGGGSTSNGRDSQAKRLGAKAA) is disordered.

It belongs to the bacterial ribosomal protein bL27 family. In terms of processing, the N-terminus is cleaved by ribosomal processing cysteine protease Prp.

The protein is Large ribosomal subunit protein bL27 of Streptococcus thermophilus (strain CNRZ 1066).